We begin with the raw amino-acid sequence, 368 residues long: COP9 signalosome complex subunit 5 (368 aa).

Positions 56 to 193 (IKISAIALLK…IGAFRTYPEG (138 aa)) constitute an MPN domain. Residues histidine 139, histidine 141, and aspartate 152 each contribute to the Zn(2+) site. The JAMM motif signature appears at 139–152 (HSHPGYGCWLSGID). The tract at residues 347-368 (TEPEKAGPSPSAPEPAVEMADA) is disordered.

It belongs to the peptidase M67A family. CSN5 subfamily. Component of the CSN complex, probably composed of csn-1, csn-2, csn-3, csn-4, csn-5, csn-6 and csn-7. Within the complex it probably interacts directly with csn-1. Interacts with glh-1 and glh-3. Interacts with lag-1. Interacts with kgb-1. A divalent metal cation is required as a cofactor.

It localises to the cytoplasm. Its subcellular location is the nucleus. Functionally, probable protease subunit of the COP9 signalosome complex (CSN), a complex involved in various cellular and developmental processes. The CSN complex is an essential regulator of the ubiquitin (Ubl) conjugation pathway by mediating the deneddylation of the cullin subunits of the SCF-type E3 ligase complexes, leading to decrease the Ubl ligase activity of SCF. In the complex, it probably acts as the catalytic center that mediates the cleavage of Nedd8 from cullins. It however has no metalloprotease activity by itself and requires the other subunits of the CSN complex. The CSN complex plays an essential role in embryogenesis and oogenesis and is required to regulate microtubule stability in the early embryo. Mediates mei-3/katanin targeting for degradation at the meiosis to mitosis transition via deneddylation of cul-3. May stabilize glh-1 protein levels by antagonizing kgb-1. The polypeptide is COP9 signalosome complex subunit 5 (csn-5) (Caenorhabditis elegans).